Reading from the N-terminus, the 500-residue chain is Cytochrome P450 71B22 (500 aa).

Residues 1–21 (MSISLYFLLLLPLFLIFFKKL) traverse the membrane as a helical segment. Cys441 contributes to the heme binding site.

Belongs to the cytochrome P450 family. Heme is required as a cofactor.

The protein resides in the membrane. The chain is Cytochrome P450 71B22 (CYP71B22) from Arabidopsis thaliana (Mouse-ear cress).